A 569-amino-acid polypeptide reads, in one-letter code: Isochorismate synthase 1, chloroplastic (569 aa).

A chloroplast-targeting transit peptide spans 1-45; that stretch reads MASLQFSSQFLGSNTKTHSSIISISRSYSPTPFTRFSRKKYESCS.

Belongs to the isochorismate synthase family. As to quaternary structure, monomer. The cofactor is Mg(2+). In terms of tissue distribution, leaves.

The protein resides in the plastid. Its subcellular location is the chloroplast. The enzyme catalyses chorismate = isochorismate. It participates in siderophore biosynthesis; salicylate biosynthesis. Functionally, isochorismate synthase involved in the synthesis of salicylic acid (SA) required for both local and systemic acquired resistance (LAR and SAR) while SA synthesized through the phenylalanine ammonium lyase (PAL) pathway seems to potentiate plant cell death. Also involved in phylloquinone (vitamin K1) synthesis. Has no isochorismate pyruvate lyase (IPL) activity. The sequence is that of Isochorismate synthase 1, chloroplastic (ICS1) from Arabidopsis thaliana (Mouse-ear cress).